The sequence spans 414 residues: Snake venom metalloproteinase atrolysin-B (414 aa).

Residues 1 to 20 (MIEVLLVTICLAVFPYQGSS) form the signal peptide. A propeptide spanning residues 21-190 (IILESGNVND…KASDLNLNPD (170 aa)) is cleaved from the precursor. Q191 is modified (pyrrolidone carboxylic acid). The 197-residue stretch at 197–393 (RYIELVVVAD…YKPQCILNKP (197 aa)) folds into the Peptidase M12B domain. The Ca(2+) site is built by E200 and D284. 2 cysteine pairs are disulfide-bonded: C308/C388 and C348/C355. Zn(2+) is bound at residue H333. The active site involves E334. H337 and H343 together coordinate Zn(2+). 7 residues coordinate Ca(2+): C388, N391, V403, N406, L408, E410, and E413. The propeptide occupies 394–414 (LRIDPVSTPVSGNELLEAGEE).

Belongs to the venom metalloproteinase (M12B) family. P-I subfamily. In terms of assembly, monomer. Requires Zn(2+) as cofactor. The N-terminus is blocked. As to expression, expressed by the venom gland.

It localises to the secreted. The enzyme catalyses Cleavage of 5-His-|-Leu-6, 10-His-|-Leu-11, 14-Ala-|-Leu-15, 16-Tyr-|-Leu-17 and 23-Gly-|-Phe-24 of insulin B chain. Identical to the cleavage of insulin B chain by atrolysin C. Also cleaves Xaa-|-Ser bonds in glucagon.. In terms of biological role, snake venom metalloproteinase that impairs hemostasis in the envenomed animal. The sequence is that of Snake venom metalloproteinase atrolysin-B from Crotalus atrox (Western diamondback rattlesnake).